The sequence spans 781 residues: Tax1-binding protein 1 homolog A (781 aa).

Coiled coils occupy residues 148 to 453 (NSDI…QGDA) and 488 to 581 (DVEK…YMRE). A compositionally biased stretch (polar residues) spans 441-465 (KLTQQQETQQGDANRNDASTETTLE). Disordered regions lie at residues 441-510 (KLTQ…EEEC) and 630-691 (ETRD…EAPA). Positions 484 to 495 (TVARDVEKSRDE) are enriched in basic and acidic residues. The segment covering 496–510 (EGNEQEEEDEEEEEC) has biased composition (acidic residues). Pro residues predominate over residues 646–656 (RPPPLAPPPWG). 2 UBZ1-type zinc fingers span residues 716–742 (HKQCPLCEVIFPPHFEQSSFERHVESH) and 743–769 (WRVCPVCSEQFPLDCQQQLYEKHVHTH). Positions 719, 722, 738, 742, 746, 749, 765, and 769 each coordinate Zn(2+).

Little expression is observed during pectoral fin development, except for an elevated level of expression in the distal mesenchyme cells of some samples.

Its function is as follows. May have anti-apoptotic activity. This chain is Tax1-binding protein 1 homolog A, found in Danio rerio (Zebrafish).